The following is a 31-amino-acid chain: MSTYAIIKTGGKQVKVEVGQAIYVEKIIPEA.

Belongs to the bacterial ribosomal protein bL21 family. In terms of assembly, part of the 50S ribosomal subunit. Contacts protein L20.

Its function is as follows. This protein binds to 23S rRNA in the presence of protein L20. This Streptococcus thermophilus protein is Large ribosomal subunit protein bL21 (rplU).